Here is a 700-residue protein sequence, read N- to C-terminus: Polyribonucleotide nucleotidyltransferase (700 aa).

Residues D486 and D492 each contribute to the Mg(2+) site. Residues 554 to 613 enclose the KH domain; the sequence is PKIISTTINPDKIREVIGPGGKMINKIIDETGVKIDINDDGRVYIFSSDIQAGKRARSMI. The region spanning 623–691 is the S1 motif domain; the sequence is GQVFLGRVIR…KQGRVNLSRK (69 aa).

The protein belongs to the polyribonucleotide nucleotidyltransferase family. Mg(2+) is required as a cofactor.

It localises to the cytoplasm. The enzyme catalyses RNA(n+1) + phosphate = RNA(n) + a ribonucleoside 5'-diphosphate. Functionally, involved in mRNA degradation. Catalyzes the phosphorolysis of single-stranded polyribonucleotides processively in the 3'- to 5'-direction. The protein is Polyribonucleotide nucleotidyltransferase of Acetivibrio thermocellus (strain ATCC 27405 / DSM 1237 / JCM 9322 / NBRC 103400 / NCIMB 10682 / NRRL B-4536 / VPI 7372) (Clostridium thermocellum).